Consider the following 487-residue polypeptide: 3-ketoacyl-CoA synthase 17 (487 aa).

The next 2 helical transmembrane spans lie at 23-43 (LITH…FMNV) and 57-77 (STGF…FFMS). The FAE domain occupies 74-363 (FFMSRPRSIY…FFATFVAKRL (290 aa)). Residues Cys218, His297, His382, His386, His415, and Asn419 contribute to the active site.

It belongs to the thiolase-like superfamily. Chalcone/stilbene synthases family. In terms of tissue distribution, expressed in flowers.

It is found in the membrane. It carries out the reaction a very-long-chain acyl-CoA + malonyl-CoA + H(+) = a very-long-chain 3-oxoacyl-CoA + CO2 + CoA. It participates in lipid metabolism; fatty acid biosynthesis. Inhibited by K3 herbicides such as alachlor, allidochlor, anilofos, cafenstrole, fentrazamide and flufenacet. Strongly inhibited by metazachlor. Functionally, active on saturated acyl-CoAs up to C22. Mediates the synthesis of VLCFAs from 20 to 26 carbons in length (e.g. C20:1, C20, C24, C26). In Arabidopsis thaliana (Mouse-ear cress), this protein is 3-ketoacyl-CoA synthase 17.